Here is a 328-residue protein sequence, read N- to C-terminus: GMP reductase (328 aa).

Cys-177 serves as the catalytic Thioimidate intermediate. 206–229 (IVADGGIRYNGDIAKSIRFGASMV) contacts NADP(+).

It belongs to the IMPDH/GMPR family. GuaC type 2 subfamily.

The catalysed reaction is IMP + NH4(+) + NADP(+) = GMP + NADPH + 2 H(+). Functionally, catalyzes the irreversible NADPH-dependent deamination of GMP to IMP. It functions in the conversion of nucleobase, nucleoside and nucleotide derivatives of G to A nucleotides, and in maintaining the intracellular balance of A and G nucleotides. The chain is GMP reductase from Levilactobacillus brevis (strain ATCC 367 / BCRC 12310 / CIP 105137 / JCM 1170 / LMG 11437 / NCIMB 947 / NCTC 947) (Lactobacillus brevis).